Here is a 258-residue protein sequence, read N- to C-terminus: Snake venom serine protease 3 (258 aa).

The N-terminal stretch at 1–18 (MVLIRVLANLLILQLSYA) is a signal peptide. Positions 19 to 24 (QKSSEL) are excised as a propeptide. Positions 25–249 (IIGGHPCNIN…YTDWIQSIIA (225 aa)) constitute a Peptidase S1 domain. 6 disulfide bridges follow: Cys31/Cys163, Cys50/Cys66, Cys98/Cys256, Cys142/Cys210, Cys174/Cys189, and Cys200/Cys225. N-linked (GlcNAc...) asparagine glycosylation is present at Asn44. Active-site charge relay system residues include His65 and Asp110. Ser204 functions as the Charge relay system in the catalytic mechanism. An N-linked (GlcNAc...) asparagine glycan is attached at Asn239.

Belongs to the peptidase S1 family. Snake venom subfamily. As to quaternary structure, monomer. Expressed by the venom gland.

It localises to the secreted. Its function is as follows. Snake venom serine protease that may act in the hemostasis system of the prey. The protein is Snake venom serine protease 3 of Protobothrops jerdonii (Jerdon's pitviper).